Here is a 146-residue protein sequence, read N- to C-terminus: MNSLSIFFIVVATAAVCLLFIQGYSIYENYGNIKEFNATHAAFEYSKSIGGTPALDRRVQDVNDTISDVKQKWRCVVYPGNGFVSASIFGFQAEVGPNNTRSIRKFNTMQQCIDFTFSDVINIDIYNPCVAPNINNAECQFLKSVL.

Residues Met1 to Ile21 traverse the membrane as a helical; Signal-anchor for type II membrane protein segment. Residues Gln22 to Leu146 are Virion surface-facing.

The protein belongs to the orthopoxvirus OPG155 protein family. Part of a stable entry-fusion complex (EFC) which is at least composed of proteins OPG143, OPG147, OPG155, OPG086, OPG094, OPG107, OPG104, and OPG099. Formation of the viral membrane is necessary for the assembly of the complex. Interacts directly with protein OPG107. Post-translationally, contains two intramolecular disulfide bonds. They are created by the viral disulfide bond formation pathway, a poxvirus-specific pathway that operates on the cytoplasmic side of the MV membranes.

The protein resides in the virion membrane. Its function is as follows. Envelope protein required for virus entry into host cell and for cell-cell fusion (syncytium formation). This chain is Envelope protein OPG155 (OPG155), found in Cowpox virus (strain GRI-90 / Grishak) (CPV).